We begin with the raw amino-acid sequence, 440 residues long: uncharacterized protein (440 aa).

A signal peptide spans 1–19 (MKKLLLAASIVYFASACLA).

This is an uncharacterized protein from Rickettsia prowazekii (strain Madrid E).